Consider the following 639-residue polypeptide: ATP-dependent zinc metalloprotease FtsH (639 aa).

Residues Met-1–Thr-4 lie on the Cytoplasmic side of the membrane. A helical transmembrane segment spans residues Val-5–Phe-25. The Periplasmic segment spans residues Gln-26–Trp-104. The chain crosses the membrane as a helical span at residues Trp-105–Ile-125. The Cytoplasmic segment spans residues Arg-126 to Ala-639. ATP is bound at residue Gly-196–Thr-203. Residue His-418 coordinates Zn(2+). Glu-419 is an active-site residue. The Zn(2+) site is built by His-422 and Asp-494. The segment at Lys-597–Ala-639 is disordered.

It in the central section; belongs to the AAA ATPase family. The protein in the C-terminal section; belongs to the peptidase M41 family. Homohexamer. Zn(2+) is required as a cofactor.

Its subcellular location is the cell inner membrane. In terms of biological role, acts as a processive, ATP-dependent zinc metallopeptidase for both cytoplasmic and membrane proteins. Plays a role in the quality control of integral membrane proteins. The protein is ATP-dependent zinc metalloprotease FtsH of Acidobacterium capsulatum (strain ATCC 51196 / DSM 11244 / BCRC 80197 / JCM 7670 / NBRC 15755 / NCIMB 13165 / 161).